The following is a 680-amino-acid chain: UvrABC system protein B (680 aa).

Residues 27–422 form the Helicase ATP-binding domain; sequence AGALGGVTFQ…GRMAGEHVAE (396 aa). 40-47 provides a ligand contact to ATP; sequence GATGTGKT. A Beta-hairpin motif is present at residues 93–116; that stretch reads YYDYYQPEAYIPQTDTYIEKSASI. Residues 443–609 enclose the Helicase C-terminal domain; sequence QVDDLLHEIH…PIVKRLDANS (167 aa). The UVR domain occupies 641 to 676; it reads PELVSQLEIQMRDAAKKLEFEKAAEYRDKIHKLRER.

Belongs to the UvrB family. As to quaternary structure, forms a heterotetramer with UvrA during the search for lesions. Interacts with UvrC in an incision complex.

It localises to the cytoplasm. Its function is as follows. The UvrABC repair system catalyzes the recognition and processing of DNA lesions. A damage recognition complex composed of 2 UvrA and 2 UvrB subunits scans DNA for abnormalities. Upon binding of the UvrA(2)B(2) complex to a putative damaged site, the DNA wraps around one UvrB monomer. DNA wrap is dependent on ATP binding by UvrB and probably causes local melting of the DNA helix, facilitating insertion of UvrB beta-hairpin between the DNA strands. Then UvrB probes one DNA strand for the presence of a lesion. If a lesion is found the UvrA subunits dissociate and the UvrB-DNA preincision complex is formed. This complex is subsequently bound by UvrC and the second UvrB is released. If no lesion is found, the DNA wraps around the other UvrB subunit that will check the other stand for damage. This chain is UvrABC system protein B, found in Gloeobacter violaceus (strain ATCC 29082 / PCC 7421).